Consider the following 583-residue polypeptide: Threonine--tRNA ligase (583 aa).

The segment at 185 to 478 (DHRKLGRELD…LVEHYGGAFP (294 aa)) is catalytic. Residues C278, H329, and H455 each coordinate Zn(2+).

This sequence belongs to the class-II aminoacyl-tRNA synthetase family. In terms of assembly, homodimer. The cofactor is Zn(2+).

It localises to the cytoplasm. The enzyme catalyses tRNA(Thr) + L-threonine + ATP = L-threonyl-tRNA(Thr) + AMP + diphosphate + H(+). Its function is as follows. Catalyzes the attachment of threonine to tRNA(Thr) in a two-step reaction: L-threonine is first activated by ATP to form Thr-AMP and then transferred to the acceptor end of tRNA(Thr). Also edits incorrectly charged L-seryl-tRNA(Thr). This chain is Threonine--tRNA ligase, found in Borrelia hermsii (strain HS1 / DAH).